We begin with the raw amino-acid sequence, 373 residues long: Dual-specificity RNA methyltransferase RlmN (373 aa).

Residue Glu94 is the Proton acceptor of the active site. The Radical SAM core domain occupies 100–339 (DGDRATLCVS…VTVRKTRGDD (240 aa)). A disulfide bridge links Cys107 with Cys344. The [4Fe-4S] cluster site is built by Cys114, Cys118, and Cys121. S-adenosyl-L-methionine is bound by residues 168–169 (GE), Ser200, 222–224 (SLH), and Asn301. Cys344 functions as the S-methylcysteine intermediate in the catalytic mechanism.

Belongs to the radical SAM superfamily. RlmN family. [4Fe-4S] cluster serves as cofactor.

The protein resides in the cytoplasm. It carries out the reaction adenosine(2503) in 23S rRNA + 2 reduced [2Fe-2S]-[ferredoxin] + 2 S-adenosyl-L-methionine = 2-methyladenosine(2503) in 23S rRNA + 5'-deoxyadenosine + L-methionine + 2 oxidized [2Fe-2S]-[ferredoxin] + S-adenosyl-L-homocysteine. It catalyses the reaction adenosine(37) in tRNA + 2 reduced [2Fe-2S]-[ferredoxin] + 2 S-adenosyl-L-methionine = 2-methyladenosine(37) in tRNA + 5'-deoxyadenosine + L-methionine + 2 oxidized [2Fe-2S]-[ferredoxin] + S-adenosyl-L-homocysteine. Specifically methylates position 2 of adenine 2503 in 23S rRNA and position 2 of adenine 37 in tRNAs. m2A2503 modification seems to play a crucial role in the proofreading step occurring at the peptidyl transferase center and thus would serve to optimize ribosomal fidelity. The sequence is that of Dual-specificity RNA methyltransferase RlmN from Photobacterium profundum (strain SS9).